We begin with the raw amino-acid sequence, 161 residues long: Crossover junction endodeoxyribonuclease RuvC (161 aa).

Active-site residues include Asp-8, Glu-67, and Asp-139. The Mg(2+) site is built by Asp-8, Glu-67, and Asp-139.

It belongs to the RuvC family. In terms of assembly, homodimer which binds Holliday junction (HJ) DNA. The HJ becomes 2-fold symmetrical on binding to RuvC with unstacked arms; it has a different conformation from HJ DNA in complex with RuvA. In the full resolvosome a probable DNA-RuvA(4)-RuvB(12)-RuvC(2) complex forms which resolves the HJ. Requires Mg(2+) as cofactor.

It is found in the cytoplasm. It carries out the reaction Endonucleolytic cleavage at a junction such as a reciprocal single-stranded crossover between two homologous DNA duplexes (Holliday junction).. The RuvA-RuvB-RuvC complex processes Holliday junction (HJ) DNA during genetic recombination and DNA repair. Endonuclease that resolves HJ intermediates. Cleaves cruciform DNA by making single-stranded nicks across the HJ at symmetrical positions within the homologous arms, yielding a 5'-phosphate and a 3'-hydroxyl group; requires a central core of homology in the junction. The consensus cleavage sequence is 5'-(A/T)TT(C/G)-3'. Cleavage occurs on the 3'-side of the TT dinucleotide at the point of strand exchange. HJ branch migration catalyzed by RuvA-RuvB allows RuvC to scan DNA until it finds its consensus sequence, where it cleaves and resolves the cruciform DNA. The chain is Crossover junction endodeoxyribonuclease RuvC from Wigglesworthia glossinidia brevipalpis.